The chain runs to 53 residues: Non-classical export protein 1 (53 aa).

The helical transmembrane segment at 7–29 threads the bilayer; that stretch reads FLLGKFSDPLLAIMVGCLSYYVY.

Belongs to the NCE101 family.

Its subcellular location is the membrane. In terms of biological role, involved in a novel pathway of export of proteins that lack a cleavable signal sequence. May be part of the export machinery or may also be a substrate for non-classical export. This Saccharomyces cerevisiae (strain ATCC 204508 / S288c) (Baker's yeast) protein is Non-classical export protein 1 (NCE101).